Here is a 159-residue protein sequence, read N- to C-terminus: NADH-quinone oxidoreductase subunit B (159 aa).

[4Fe-4S] cluster contacts are provided by C32, C33, C97, and C126.

The protein belongs to the complex I 20 kDa subunit family. NDH-1 is composed of 14 different subunits. Subunits NuoB, C, D, E, F, and G constitute the peripheral sector of the complex. [4Fe-4S] cluster is required as a cofactor.

The protein resides in the cell inner membrane. The catalysed reaction is a quinone + NADH + 5 H(+)(in) = a quinol + NAD(+) + 4 H(+)(out). In terms of biological role, NDH-1 shuttles electrons from NADH, via FMN and iron-sulfur (Fe-S) centers, to quinones in the respiratory chain. The immediate electron acceptor for the enzyme in this species is believed to be ubiquinone. Couples the redox reaction to proton translocation (for every two electrons transferred, four hydrogen ions are translocated across the cytoplasmic membrane), and thus conserves the redox energy in a proton gradient. The sequence is that of NADH-quinone oxidoreductase subunit B from Helicobacter acinonychis (strain Sheeba).